The following is a 232-amino-acid chain: Ribose-5-phosphate isomerase A (232 aa).

Residues Thr-29 to Thr-32, Asp-84 to Asp-87, and Lys-97 to Gly-100 contribute to the substrate site. The active-site Proton acceptor is the Glu-106. A substrate-binding site is contributed by Lys-124.

It belongs to the ribose 5-phosphate isomerase family. Homodimer.

It carries out the reaction aldehydo-D-ribose 5-phosphate = D-ribulose 5-phosphate. It participates in carbohydrate degradation; pentose phosphate pathway; D-ribose 5-phosphate from D-ribulose 5-phosphate (non-oxidative stage): step 1/1. Functionally, catalyzes the reversible conversion of ribose-5-phosphate to ribulose 5-phosphate. This chain is Ribose-5-phosphate isomerase A, found in Brucella suis biovar 1 (strain 1330).